Reading from the N-terminus, the 805-residue chain is Leucine--tRNA ligase (805 aa).

The short motif at 40-51 (PYPSGSGLHVGH) is the 'HIGH' region element. Residues 576-580 (KMSKS) carry the 'KMSKS' region motif. Lys-579 is a binding site for ATP.

The protein belongs to the class-I aminoacyl-tRNA synthetase family.

Its subcellular location is the cytoplasm. The catalysed reaction is tRNA(Leu) + L-leucine + ATP = L-leucyl-tRNA(Leu) + AMP + diphosphate. The chain is Leucine--tRNA ligase from Chlorobium luteolum (strain DSM 273 / BCRC 81028 / 2530) (Pelodictyon luteolum).